A 500-amino-acid polypeptide reads, in one-letter code: Trehalose-6-phosphate synthase (500 aa).

Arginine 28 serves as a coordination point for D-glucose 6-phosphate. 48–49 is a binding site for UDP-alpha-D-glucose; it reads GG. 2 residues coordinate D-glucose 6-phosphate: tyrosine 108 and aspartate 162. Residues arginine 304 and lysine 309 each contribute to the UDP-alpha-D-glucose site. Arginine 342 is a D-glucose 6-phosphate binding site. UDP-alpha-D-glucose is bound at residue 407-411; the sequence is LVAKE.

Belongs to the glycosyltransferase 20 family. As to quaternary structure, homotetramer.

It carries out the reaction ADP-alpha-D-glucose + D-glucose 6-phosphate = alpha,alpha-trehalose 6-phosphate + ADP + H(+). The enzyme catalyses CDP-alpha-D-glucose + D-glucose 6-phosphate = alpha,alpha-trehalose 6-phosphate + CDP + H(+). The catalysed reaction is GDP-alpha-D-glucose + D-glucose 6-phosphate = alpha,alpha-trehalose 6-phosphate + GDP + H(+). It catalyses the reaction TDP-alpha-D-glucose + D-glucose 6-phosphate = 5-methyl-UDP + alpha,alpha-trehalose 6-phosphate + H(+). It carries out the reaction D-glucose 6-phosphate + UDP-alpha-D-glucose = alpha,alpha-trehalose 6-phosphate + UDP + H(+). Its pathway is glycan biosynthesis; trehalose biosynthesis. Its function is as follows. Probably involved in the osmoprotection via the biosynthesis of trehalose and in the production of glycogen and alpha-glucan via the TreS-Pep2 branch involved in the biosynthesis of maltose-1-phosphate (M1P). Catalyzes the transfer of glucose from UDP-glucose (UDP-Glc) to D-glucose 6-phosphate (Glc-6-P) to form trehalose-6-phosphate. Probably also able to use ADP-Glc, CDP-Glc, GDP-Glc and TDP-Glc as glucosyl donors. This is Trehalose-6-phosphate synthase from Mycobacterium bovis (strain ATCC BAA-935 / AF2122/97).